The following is a 247-amino-acid chain: MLGNEIKVILLDIEGTTTSIGFVHHILFPYAKQNVEEYLKKEWDSDEIKQIVQDLQQVPSFEVYKATLVDSSASSITVELITGFVRYLIDKDLKVTPLKTLQGLIWANGYESGELKGHVYDDVKEAFEHWNNSGLKLAIYSSGSVAAQKLIFGYSTSGNLLPYLSAHFDTHVGHKQEKDSYINIAKSLETNPEHILFLTDIPGEADAARAAGLQAIILQRFGNAPLTDDEKSLNKIINDFSVLKVDK.

Mg(2+) contacts are provided by D12 and E14. Substrate contacts are provided by residues 141 to 142 and K175; that span reads SS. D200 contributes to the Mg(2+) binding site.

This sequence belongs to the HAD-like hydrolase superfamily. MasA/MtnC family. In terms of assembly, monomer. It depends on Mg(2+) as a cofactor.

The protein localises to the cytoplasm. Its subcellular location is the nucleus. It catalyses the reaction 5-methylsulfanyl-2,3-dioxopentyl phosphate + H2O = 1,2-dihydroxy-5-(methylsulfanyl)pent-1-en-3-one + phosphate. The protein operates within amino-acid biosynthesis; L-methionine biosynthesis via salvage pathway; L-methionine from S-methyl-5-thio-alpha-D-ribose 1-phosphate: step 3/6. It functions in the pathway amino-acid biosynthesis; L-methionine biosynthesis via salvage pathway; L-methionine from S-methyl-5-thio-alpha-D-ribose 1-phosphate: step 4/6. Its function is as follows. Bifunctional enzyme that catalyzes the enolization of 2,3-diketo-5-methylthiopentyl-1-phosphate (DK-MTP-1-P) into the intermediate 2-hydroxy-3-keto-5-methylthiopentenyl-1-phosphate (HK-MTPenyl-1-P), which is then dephosphorylated to form the acireductone 1,2-dihydroxy-3-keto-5-methylthiopentene (DHK-MTPene). This chain is Enolase-phosphatase E1, found in Drosophila willistoni (Fruit fly).